The primary structure comprises 160 residues: uncharacterized protein (160 aa).

This is an uncharacterized protein from Mycobacterium tuberculosis (strain ATCC 25618 / H37Rv).